The chain runs to 179 residues: Large ribosomal subunit protein uL6 (179 aa).

This sequence belongs to the universal ribosomal protein uL6 family. In terms of assembly, part of the 50S ribosomal subunit.

In terms of biological role, this protein binds to the 23S rRNA, and is important in its secondary structure. It is located near the subunit interface in the base of the L7/L12 stalk, and near the tRNA binding site of the peptidyltransferase center. This is Large ribosomal subunit protein uL6 from Chlorobium phaeovibrioides (strain DSM 265 / 1930) (Prosthecochloris vibrioformis (strain DSM 265)).